The following is a 495-amino-acid chain: UDP-N-acetylmuramoyl-L-alanyl-D-glutamate--2,6-diaminopimelate ligase (495 aa).

UDP-N-acetyl-alpha-D-muramoyl-L-alanyl-D-glutamate contacts are provided by residues Leu-27, Ser-29, and His-44 to Ala-46. Gly-116 to Thr-122 provides a ligand contact to ATP. UDP-N-acetyl-alpha-D-muramoyl-L-alanyl-D-glutamate-binding positions include Asn-157, Thr-158–Thr-159, Ser-185, Gln-191, and Arg-193. An N6-carboxylysine modification is found at Lys-225. Residues Arg-390, Asp-414 to Arg-417, Gly-465, and Glu-469 contribute to the meso-2,6-diaminopimelate site. Positions Asp-414–Arg-417 match the Meso-diaminopimelate recognition motif motif.

This sequence belongs to the MurCDEF family. MurE subfamily. The cofactor is Mg(2+). Carboxylation is probably crucial for Mg(2+) binding and, consequently, for the gamma-phosphate positioning of ATP.

It localises to the cytoplasm. It catalyses the reaction UDP-N-acetyl-alpha-D-muramoyl-L-alanyl-D-glutamate + meso-2,6-diaminopimelate + ATP = UDP-N-acetyl-alpha-D-muramoyl-L-alanyl-gamma-D-glutamyl-meso-2,6-diaminopimelate + ADP + phosphate + H(+). The protein operates within cell wall biogenesis; peptidoglycan biosynthesis. In terms of biological role, catalyzes the addition of meso-diaminopimelic acid to the nucleotide precursor UDP-N-acetylmuramoyl-L-alanyl-D-glutamate (UMAG) in the biosynthesis of bacterial cell-wall peptidoglycan. This chain is UDP-N-acetylmuramoyl-L-alanyl-D-glutamate--2,6-diaminopimelate ligase, found in Escherichia coli O6:H1 (strain CFT073 / ATCC 700928 / UPEC).